A 109-amino-acid chain; its full sequence is N-cym protein (109 aa).

Interacts with MYCN and GSK3B. Expressed in the neuronal cells of the cerebrum and cerebellum, spermatocytes of the testis, pancreatic cells and also the heart. Expressed in both primary and metastatic neuroblastomas and in thyroid tumors (at protein level). Expression is associated with poor prognosis in neuroblastoma. Expressed in the fetal brain, lung, liver and kidney at varying low levels.

Its subcellular location is the cytoplasm. It localises to the nucleus. Its function is as follows. Regulates stability of MYCN in neuroblastoma cells by inhibiting GSK3B-mediated MYCN phosphorylation. Inhibits GSK3B activity by promoting its phosphorylation at 'Ser-9'. This Homo sapiens (Human) protein is N-cym protein (MYCNOS).